A 400-amino-acid polypeptide reads, in one-letter code: Putative F-box protein At1g30920 (400 aa).

One can recognise an F-box domain in the interval 4–49 (EENTDSIPIDLILDILSRLPSKSIARCRCVSKLWESMIRQSYFTEL).

This chain is Putative F-box protein At1g30920, found in Arabidopsis thaliana (Mouse-ear cress).